The chain runs to 29 residues: Cytochrome b6-f complex subunit 8 (29 aa).

Residues 3–23 (IVSLAWAALMIVFTFSLSLVV) traverse the membrane as a helical segment.

The protein belongs to the PetN family. In terms of assembly, the 4 large subunits of the cytochrome b6-f complex are cytochrome b6, subunit IV (17 kDa polypeptide, PetD), cytochrome f and the Rieske protein, while the 4 small subunits are PetG, PetL, PetM and PetN. The complex functions as a dimer.

Its subcellular location is the plastid membrane. Functionally, component of the cytochrome b6-f complex, which mediates electron transfer between photosystem II (PSII) and photosystem I (PSI), cyclic electron flow around PSI, and state transitions. This is Cytochrome b6-f complex subunit 8 from Cuscuta exaltata (Tall dodder).